The chain runs to 632 residues: Chaperone protein HtpG (632 aa).

Positions 1–339 (MAHETMSFQA…SADLPLNVSR (339 aa)) are a; substrate-binding. The segment at 340 to 559 (EILQESRDVK…DNDMSGYLQR (220 aa)) is b. The c stretch occupies residues 560–632 (MLKAAGQNAP…TNALLLSRAA (73 aa)).

This sequence belongs to the heat shock protein 90 family. Homodimer.

It is found in the cytoplasm. In terms of biological role, molecular chaperone. Has ATPase activity. This chain is Chaperone protein HtpG, found in Burkholderia lata (strain ATCC 17760 / DSM 23089 / LMG 22485 / NCIMB 9086 / R18194 / 383).